We begin with the raw amino-acid sequence, 158 residues long: Cyclic pyranopterin monophosphate synthase (158 aa).

Substrate is bound by residues 75 to 77 and 113 to 114; these read LCH and ME. Residue aspartate 128 is part of the active site.

Belongs to the MoaC family. Homohexamer; trimer of dimers.

It catalyses the reaction (8S)-3',8-cyclo-7,8-dihydroguanosine 5'-triphosphate = cyclic pyranopterin phosphate + diphosphate. Its pathway is cofactor biosynthesis; molybdopterin biosynthesis. Its function is as follows. Catalyzes the conversion of (8S)-3',8-cyclo-7,8-dihydroguanosine 5'-triphosphate to cyclic pyranopterin monophosphate (cPMP). The chain is Cyclic pyranopterin monophosphate synthase from Actinobacillus succinogenes (strain ATCC 55618 / DSM 22257 / CCUG 43843 / 130Z).